A 407-amino-acid chain; its full sequence is Arginine deiminase (407 aa).

Cys-397 acts as the Amidino-cysteine intermediate in catalysis.

This sequence belongs to the arginine deiminase family.

The protein resides in the cytoplasm. The enzyme catalyses L-arginine + H2O = L-citrulline + NH4(+). It participates in amino-acid degradation; L-arginine degradation via ADI pathway; carbamoyl phosphate from L-arginine: step 1/2. This is Arginine deiminase from Pediococcus pentosaceus (strain ATCC 25745 / CCUG 21536 / LMG 10740 / 183-1w).